A 49-amino-acid polypeptide reads, in one-letter code: RTCQSQSHKFKGACFSDTNCASVCRTENFPRGQCNQHHVERKCYCERDC.

Cystine bridges form between cysteine 3–cysteine 49, cysteine 14–cysteine 34, cysteine 20–cysteine 43, and cysteine 24–cysteine 45.

Functionally, plant defense peptide. This is Defensin Tm-AMP-D1.2 from Triticum monococcum (Einkorn wheat).